Reading from the N-terminus, the 309-residue chain is Tagatose-6-phosphate kinase (309 aa).

The protein belongs to the carbohydrate kinase PfkB family. LacC subfamily.

The catalysed reaction is D-tagatofuranose 6-phosphate + ATP = D-tagatofuranose 1,6-bisphosphate + ADP + H(+). Its pathway is carbohydrate metabolism; D-tagatose 6-phosphate degradation; D-glyceraldehyde 3-phosphate and glycerone phosphate from D-tagatose 6-phosphate: step 1/2. The chain is Tagatose-6-phosphate kinase from Streptococcus pyogenes serotype M28 (strain MGAS6180).